We begin with the raw amino-acid sequence, 372 residues long: Glutamate 5-kinase (372 aa).

Lys-14 contributes to the ATP binding site. The substrate site is built by Ser-54, Asp-141, and Asn-153. ATP is bound at residue Thr-173–Asp-174. The region spanning Arg-280–Met-358 is the PUA domain.

Belongs to the glutamate 5-kinase family.

Its subcellular location is the cytoplasm. It catalyses the reaction L-glutamate + ATP = L-glutamyl 5-phosphate + ADP. The protein operates within amino-acid biosynthesis; L-proline biosynthesis; L-glutamate 5-semialdehyde from L-glutamate: step 1/2. Catalyzes the transfer of a phosphate group to glutamate to form L-glutamate 5-phosphate. The sequence is that of Glutamate 5-kinase from Pseudomonas syringae pv. syringae (strain B728a).